The chain runs to 226 residues: Large ribosomal subunit protein uL1 (226 aa).

The protein belongs to the universal ribosomal protein uL1 family. As to quaternary structure, part of the 50S ribosomal subunit.

Functionally, binds directly to 23S rRNA. The L1 stalk is quite mobile in the ribosome, and is involved in E site tRNA release. Its function is as follows. Protein L1 is also a translational repressor protein, it controls the translation of the L11 operon by binding to its mRNA. In Buchnera aphidicola subsp. Cinara cedri (strain Cc), this protein is Large ribosomal subunit protein uL1.